We begin with the raw amino-acid sequence, 471 residues long: Membrane-associated sulfotransferase kil1 (471 aa).

The Cytoplasmic portion of the chain corresponds to 1 to 12 (MSTTSMILTKKN). A helical; Signal-anchor for type II membrane protein membrane pass occupies residues 13–33 (IIILSIIIITIIAYQFYITSP). Residues 34–471 (QSFPSSNTIT…LLNRDFKWQN (438 aa)) are Lumenal-facing. Asn-47 carries N-linked (GlcNAc...) asparagine glycosylation. 2 stretches are compositionally biased toward low complexity: residues 89 to 105 (NQNE…NNNK) and 112 to 127 (NNNN…NNNN). The tract at residues 89–127 (NQNENQNQINNEYNNNKLNDEQENNNNNNYNNNNNNNNN) is disordered. 3'-phosphoadenylyl sulfate-binding positions include 167-172 (KSGTTF), Arg-252, and Ser-260. Asn-324 and Asn-344 each carry an N-linked (GlcNAc...) asparagine glycan. Tyr-348 is a 3'-phosphoadenylyl sulfate binding site.

This sequence belongs to the sulfotransferase 1 family.

Its subcellular location is the membrane. In terms of biological role, sulfotransferase involved in intracellular killing of bacteria. The polypeptide is Membrane-associated sulfotransferase kil1 (kil1) (Dictyostelium discoideum (Social amoeba)).